A 62-amino-acid polypeptide reads, in one-letter code: MSERQSAGATNGKDKTSGDNDGQKKVQEEFDIDMDAPETERAAVAIQSQFRKFQKKKAGSQS.

The interval 1-39 is disordered; sequence MSERQSAGATNGKDKTSGDNDGQKKVQEEFDIDMDAPET. Residues 12–28 show a composition bias toward basic and acidic residues; that stretch reads GKDKTSGDNDGQKKVQE. Residues 28-40 form an acidic; binds calcium and is required for modulating the calcium-binding kinetics of calmodulin region; it reads EEFDIDMDAPETE. The IQ domain maps to 39 to 62; it reads TERAAVAIQSQFRKFQKKKAGSQS.

The protein belongs to the PCP4 family. In terms of assembly, binds to both calcium-free and calcium-bound calmodulin. The affinity for the calcium-bound form is 50-fold greater.

In terms of biological role, functions as a modulator of calcium-binding by calmodulin. Thereby, regulates calmodulin activity and the different processes it controls. For instance, may play a role in neuronal differentiation through activation of calmodulin-dependent kinase signaling pathways. This chain is Calmodulin regulator protein PCP4, found in Mus musculus (Mouse).